The chain runs to 440 residues: Oligodendrocyte-myelin glycoprotein (440 aa).

The signal sequence occupies residues 1 to 24; it reads MEYQILKMSLCLFILLFLTPGILC. The LRRNT domain occupies 25 to 55; the sequence is ICPLQCICTERHRHVDCSGRNLSTLPSGLQE. N-linked (GlcNAc...) asparagine glycosylation is found at asparagine 45 and asparagine 61. 8 LRR repeats span residues 56–77, 79–100, 101–121, 124–145, 147–168, 169–189, 192–213, and 216–239; these read NIIH…LTQY, NLRT…LPRS, LWNM…DTAY, NLKY…KNTL, SLEV…MPSK, LHIV…TLIN, NLTH…SFDQ, and QLQE…TYLL. Asparagine 103 carries N-linked (GlcNAc...) asparagine glycosylation. N-linked (GlcNAc...) asparagine glycosylation is found at asparagine 152, asparagine 176, asparagine 189, asparagine 192, and asparagine 234. 5 Ser/Thr-rich repeats span residues 229–270, 271–292, 293–335, 336–377, and 378–416; these read CDHK…YPTP, SGFT…INSL, SVVT…VPYP, EDTS…SPTP, and MTLS…TPLP. Asparagine 364 and asparagine 389 each carry an N-linked (GlcNAc...) asparagine glycan. Residue serine 417 is the site of GPI-anchor amidated serine attachment. Residues 418 to 440 constitute a propeptide, removed in mature form; the sequence is VANAWKVNASFLLLLNVVVMLAV. Asparagine 425 carries an N-linked (GlcNAc...) asparagine glycan.

As to quaternary structure, binds to RTN4R. Post-translationally, O-glycosylated in its Ser/Thr-rich repeat domain. In terms of tissue distribution, oligodendrocytes and myelin of the central nervous system.

It is found in the cell membrane. Cell adhesion molecule contributing to the interactive process required for myelination in the central nervous system. This is Oligodendrocyte-myelin glycoprotein (OMG) from Homo sapiens (Human).